The chain runs to 82 residues: Small ribosomal subunit protein bS18 (82 aa).

The tract at residues methionine 1–proline 21 is disordered.

Belongs to the bacterial ribosomal protein bS18 family. As to quaternary structure, part of the 30S ribosomal subunit. Forms a tight heterodimer with protein bS6.

Functionally, binds as a heterodimer with protein bS6 to the central domain of the 16S rRNA, where it helps stabilize the platform of the 30S subunit. The protein is Small ribosomal subunit protein bS18 of Corynebacterium kroppenstedtii (strain DSM 44385 / JCM 11950 / CIP 105744 / CCUG 35717).